Reading from the N-terminus, the 108-residue chain is uncharacterized protein (108 aa).

This is an uncharacterized protein from Saccharolobus islandicus (Sulfolobus islandicus).